The sequence spans 491 residues: Proline--tRNA ligase (491 aa).

This sequence belongs to the class-II aminoacyl-tRNA synthetase family. ProS type 3 subfamily. In terms of assembly, homodimer.

It is found in the cytoplasm. It catalyses the reaction tRNA(Pro) + L-proline + ATP = L-prolyl-tRNA(Pro) + AMP + diphosphate. Catalyzes the attachment of proline to tRNA(Pro) in a two-step reaction: proline is first activated by ATP to form Pro-AMP and then transferred to the acceptor end of tRNA(Pro). This chain is Proline--tRNA ligase, found in Amoebophilus asiaticus (strain 5a2).